The following is an 85-amino-acid chain: LCPLDVLQLSSELLDIDGNEVEASRILSDITAFGGIRCPLTVVQSRGIGTIISSPYRFIAEGHPLSLKDMDGWFRVSDDEFNNYK.

In terms of processing, the N-terminus is blocked.

In terms of biological role, inhibition of trypsin. Has anticarcinogenic activity, prevents transformation of DMBA-treated JB6 cells. Has antipromoter activity, prevents promotion by tetradecanoyl phorbal acetate (TPA) in JB6 cells. Prevents tertiary butyl hydroperoxide-induced mutagenesis. Protects AT base pairs and shows antimutagenesis activity in TA102 and TA104 S.typhimurium mutagenesis tests. Inhibits paw edema formation induced by phospholipase A2 in Swiss Wistar mice. Prevents the release of arachidonate, the parent compound for the synthesis of prostaglandins and prostacyclins. Has antimalarial activity, kills P.falciparum. Has antivenom activity, nullifies the lethal effects of N.naja venom and inhibits phospholipase A2 present in N.naja venom. Has antifungal activity, inhibits cilia formation by A.niger. Is not toxic or allergenic. In Curcuma longa (Turmeric), this protein is Turmerin.